A 402-amino-acid polypeptide reads, in one-letter code: Meiosis-specific cyclin rem1 (402 aa).

The protein belongs to the cyclin family. Cyclin AB subfamily.

In terms of biological role, required for pre-meiotic DNA synthesis and S phase progression. Regulates levels of meiotic intragenic recombination. This Schizosaccharomyces pombe (strain 972 / ATCC 24843) (Fission yeast) protein is Meiosis-specific cyclin rem1 (rem1).